The primary structure comprises 201 residues: FMN-dependent NADH:quinone oxidoreductase (201 aa).

M92 to L95 serves as a coordination point for FMN.

It belongs to the azoreductase type 1 family. Homodimer. The cofactor is FMN.

The catalysed reaction is 2 a quinone + NADH + H(+) = 2 a 1,4-benzosemiquinone + NAD(+). It carries out the reaction N,N-dimethyl-1,4-phenylenediamine + anthranilate + 2 NAD(+) = 2-(4-dimethylaminophenyl)diazenylbenzoate + 2 NADH + 2 H(+). In terms of biological role, quinone reductase that provides resistance to thiol-specific stress caused by electrophilic quinones. Its function is as follows. Also exhibits azoreductase activity. Catalyzes the reductive cleavage of the azo bond in aromatic azo compounds to the corresponding amines. The sequence is that of FMN-dependent NADH:quinone oxidoreductase from Caldicellulosiruptor bescii (strain ATCC BAA-1888 / DSM 6725 / KCTC 15123 / Z-1320) (Anaerocellum thermophilum).